The primary structure comprises 704 residues: Fibulin-1 (704 aa).

An N-terminal signal peptide occupies residues 1–25 (MDKLRGARPLRLLLLLLALLPALRG). 35 cysteine pairs are disulfide-bonded: cysteine 33–cysteine 59, cysteine 34–cysteine 66, cysteine 47–cysteine 67, cysteine 76–cysteine 107, cysteine 89–cysteine 108, cysteine 110–cysteine 134, cysteine 111–cysteine 141, cysteine 124–cysteine 142, cysteine 181–cysteine 191, cysteine 187–cysteine 200, cysteine 202–cysteine 215, cysteine 221–cysteine 234, cysteine 228–cysteine 243, cysteine 249–cysteine 261, cysteine 267–cysteine 280, cysteine 274–cysteine 289, cysteine 295–cysteine 307, cysteine 313–cysteine 326, cysteine 320–cysteine 335, cysteine 342–cysteine 355, cysteine 361–cysteine 374, cysteine 368–cysteine 383, cysteine 385–cysteine 398, cysteine 404–cysteine 416, cysteine 412–cysteine 425, cysteine 427–cysteine 440, cysteine 446–cysteine 455, cysteine 451–cysteine 464, cysteine 466–cysteine 480, cysteine 486–cysteine 499, cysteine 495–cysteine 508, cysteine 510–cysteine 524, cysteine 530–cysteine 543, cysteine 537–cysteine 552, and cysteine 557–cysteine 578. 3 Anaphylatoxin-like domains span residues 33 to 74 (CCDK…LEEH), 75 to 109 (YCSD…KCCY), and 110 to 142 (CCLL…RACC). Asparagine 96 carries N-linked (GlcNAc...) asparagine glycosylation. The 40-residue stretch at 177-216 (LHDGCRGGGPCSQQCRDTGSSYVCSCFVGYQLQPDGVNCE) folds into the EGF-like 1 domain. The EGF-like 2; calcium-binding domain maps to 217–262 (DINECITGTHSCGIGQTCVNTLGSFRCQRDTSCGTGYELTDDSRCK). The EGF-like 3; calcium-binding domain occupies 263 to 308 (DIDECETGTHNCPPDFICQNTPGSFRCRPKLQCMNGFIQDALGNCI). The EGF-like 4; calcium-binding domain maps to 309-356 (DINECLSTNMPCPAGQICINTDGSYTCQRISPSCGRGYHLNEDGTRCV). The EGF-like 5; calcium-binding domain maps to 357-399 (DVDECSSSDQPCGEGHVCINGPGNYRCECKSGYSFDVISRTCI). Residues 357–441 (DVDECSSSDQ…KLSSDGRSCE (85 aa)) are self-association and FN1-binding. The 42-residue stretch at 400-441 (DINECRRYPGRLCAHKCENTPGSYYCTCTMGFKLSSDGRSCE) folds into the EGF-like 6; calcium-binding domain. Residues 442–481 (DLNECESSPCSQECANVYGSYQCYCRRGFQLSDIDGISCE) enclose the EGF-like 7; calcium-binding domain. The region spanning 482–525 (DIDECALPTGGHICSFRCINIPGSFQCTCPSTGYRLAPNARNCQ) is the EGF-like 8; calcium-binding domain. One can recognise an EGF-like 9; calcium-binding domain in the interval 526-579 (DIDECVAETHNCSFNETCFNIQGGFRCLSLECPENYRKSGDTVRLEKTDTIRCI). Asparagine 536 and asparagine 540 each carry an N-linked (GlcNAc...) asparagine glycan.

This sequence belongs to the fibulin family. As to quaternary structure, homomultimerizes and interacts with various extracellular matrix components.

Its subcellular location is the secreted. It is found in the extracellular space. The protein resides in the extracellular matrix. In terms of biological role, incorporated into fibronectin-containing matrix fibers. May play a role in cell adhesion and migration along protein fibers within the extracellular matrix (ECM). Could be important for certain developmental processes and contribute to the supramolecular organization of ECM architecture, in particular to those of basement membranes. The sequence is that of Fibulin-1 (FBLN1) from Gallus gallus (Chicken).